The following is a 180-amino-acid chain: MKTIYFVAGLFVMLVQGSWQRSLQNTEEKSRSFPAPQTDPLDDPDQMTEDKRHSQGTFTSDYSKYLDSRRAQDFVQWLMNTKRNKNNIAKRHDEFERHAEGTFTSDVSSYLEGQAAKEFIAWLVKGRGRRDFPEEVTIVEELRRRHADGSFSDEMNTVLDNLATRDFINWLLHTKITDSL.

The first 20 residues, 1-20 (MKTIYFVAGLFVMLVQGSWQ), serve as a signal peptide directing secretion. Positions 25–59 (NTEEKSRSFPAPQTDPLDDPDQMTEDKRHSQGTFT) are disordered. Phosphoserine is present on serine 54. A propeptide spanning residues 84 to 89 (NKNNIA) is cleaved from the precursor. Phosphoserine is present on residues serine 105 and serine 108. Arginine 127 bears the Arginine amide mark. The propeptide occupies 131–145 (DFPEEVTIVEELRRR). Serine 150 and serine 152 each carry phosphoserine.

It belongs to the glucagon family. Proglucagon is post-translationally processed in a tissue-specific manner in pancreatic A cells and intestinal L cells. In pancreatic A cells, the major bioactive hormone is glucagon cleaved by PCSK2/PC2. In the intestinal L cells PCSK1/PC1 liberates GLP-1, GLP-2, glicentin and oxyntomodulin. GLP-1 is further N-terminally truncated by post-translational processing in the intestinal L cells resulting in GLP-1(7-37) GLP-1-(7-36)amide. The C-terminal amidation is neither important for the metabolism of GLP-1 nor for its effects on the endocrine pancreas. As to expression, glucagon is secreted in the A cells of the islets of Langerhans. GLP-1, GLP-2, oxyntomodulin and glicentin are secreted from enteroendocrine cells throughout the gastrointestinal tract. GLP-1 and GLP-2 are also secreted in selected neurons in the brain.

It is found in the secreted. Plays a key role in glucose metabolism and homeostasis. Regulates blood glucose by increasing gluconeogenesis and decreasing glycolysis. A counterregulatory hormone of insulin, raises plasma glucose levels in response to insulin-induced hypoglycemia. Plays an important role in initiating and maintaining hyperglycemic conditions in diabetes. In terms of biological role, potent stimulator of glucose-dependent insulin release. Also stimulates insulin release in response to IL6. Plays important roles on gastric motility and the suppression of plasma glucagon levels. May be involved in the suppression of satiety and stimulation of glucose disposal in peripheral tissues, independent of the actions of insulin. Has growth-promoting activities on intestinal epithelium. May also regulate the hypothalamic pituitary axis (HPA) via effects on LH, TSH, CRH, oxytocin, and vasopressin secretion. Increases islet mass through stimulation of islet neogenesis and pancreatic beta cell proliferation. Inhibits beta cell apoptosis. Functionally, stimulates intestinal growth and up-regulates villus height in the small intestine, concomitant with increased crypt cell proliferation and decreased enterocyte apoptosis. The gastrointestinal tract, from the stomach to the colon is the principal target for GLP-2 action. Plays a key role in nutrient homeostasis, enhancing nutrient assimilation through enhanced gastrointestinal function, as well as increasing nutrient disposal. Stimulates intestinal glucose transport and decreases mucosal permeability. Its function is as follows. Significantly reduces food intake. Inhibits gastric emptying in humans. Suppression of gastric emptying may lead to increased gastric distension, which may contribute to satiety by causing a sensation of fullness. May modulate gastric acid secretion and the gastro-pyloro-duodenal activity. May play an important role in intestinal mucosal growth in the early period of life. In Sus scrofa (Pig), this protein is Pro-glucagon (GCG).